Here is a 480-residue protein sequence, read N- to C-terminus: Pre-glycoprotein polyprotein GP complex (480 aa).

Gly-2 is lipidated: N-myristoyl glycine; by host. Residues 2-17 (GQLVSFFQEIPVFFQE) lie on the Extracellular side of the membrane. The helical transmembrane segment at 18–33 (ALNIALAVVTLLAIVK) threads the bilayer. The Cytoplasmic segment spans residues 34-58 (GVLNLWKSGLFQLLMFLILAGRSCS). Cys-57 contributes to the Zn(2+) binding site. Topologically, residues 59-419 (FRIGYHTSFE…QGRTPLTLVD (361 aa)) are extracellular. 4 disulfide bridges follow: Cys-85-Cys-221, Cys-266-Cys-279, Cys-288-Cys-297, and Cys-351-Cys-372. 3 N-linked (GlcNAc...) asparagine; by host glycosylation sites follow: Asn-88, Asn-174, and Asn-214. Residues Asn-352, Asn-360, Asn-377, and Asn-382 are each glycosylated (N-linked (GlcNAc...) asparagine; by host). Residues 420–440 (LCFWSAVFYTTTLFLHLVGFP) form a helical membrane-spanning segment. Topologically, residues 441–480 (THRHISGEPCPLPHRLNRHGACNCGRFKRLKKPLVWYKHH) are cytoplasmic. Zn(2+)-binding residues include His-442, His-444, Cys-450, His-454, Cys-462, Cys-464, and His-480.

The protein belongs to the arenaviridae GPC protein family. In terms of assembly, interacts with glycoprotein G2. Part of the GP complex (GP-C) together with glycoprotein G1 and glycoprotein G2. The GP-complex interacts with protein Z, which interacts with ribonucleocapsid; these interactions may induce virion budding. Homotrimer; disulfide-linked. In pre-fusion state, G1 homotrimers bind G2 homotrimers via ionic interactions. Part of the GP complex (GP-C) together with glycoprotein G2 and the stable signal peptide. The GP-complex interacts with protein Z, which interacts with ribonucleocapsid; these interactions may induce virion budding. As to quaternary structure, homotrimer. Interacts with the stable signal peptide. In pre-fusion state, G2 homotrimers bind G1 homotrimers via ionic interactions. Part of the GP complex (GP-C) together with glycoprotein G1 and the stable signal peptide. Acidification in the endosome triggers rearrangements, which ultimately leads to a 6 helix bundle formed by the two heptad repeat domains (HR1 and HR2) in post-fusion state. The GP-complex interacts with protein Z, which interacts with ribonucleocapsid; these interactions may induce virion budding. Post-translationally, specific enzymatic cleavages in vivo yield mature proteins. GP-C polyprotein is cleaved in the endoplasmic reticulum by the host protease MBTPS1. Only cleaved glycoprotein is incorporated into virions. The SSP remains stably associated with the GP complex following cleavage by signal peptidase and plays crucial roles in the trafficking of GP through the secretory pathway. In terms of processing, myristoylation is necessary for GP2-mediated fusion activity.

The protein resides in the virion membrane. Its subcellular location is the host endoplasmic reticulum membrane. It is found in the host Golgi apparatus membrane. The protein localises to the host cell membrane. Its function is as follows. Functions as a cleaved signal peptide that is retained as the third component of the GP complex (GP-C). Helps to stabilize the spike complex in its native conformation. The SSP is required for efficient glycoprotein expression, post-translational maturation cleavage of G1 and G2, glycoprotein transport to the cell surface plasma membrane, formation of infectious virus particles, and acid pH-dependent glycoprotein-mediated cell fusion. Forms the virion spikes together with glycoprotein G2. The glycoprotein spike trimers are connected to the underlying matrix. Interacts with the host receptor leading to virus endocytosis. Functionally, forms the virion spikes together with glycoprotein G1. The glycoprotein spike trimers are connected to the underlying matrix. Class I viral fusion protein that directs fusion of viral and host endosomal membranes, leading to delivery of the nucleocapsid into the cytoplasm. Membrane fusion is mediated by irreversible conformational changes induced by acidification. This Cupixi mammarenavirus (isolate Rat/Brasil/BeAn 119303/1970) (CPXV) protein is Pre-glycoprotein polyprotein GP complex.